The chain runs to 252 residues: Triosephosphate isomerase (252 aa).

10–12 serves as a coordination point for substrate; that stretch reads NWK. The active-site Electrophile is the His96. The Proton acceptor role is filled by Glu168. Residues Gly174, Ser214, and 235 to 236 contribute to the substrate site; that span reads GG.

It belongs to the triosephosphate isomerase family. In terms of assembly, homodimer.

It localises to the cytoplasm. The enzyme catalyses D-glyceraldehyde 3-phosphate = dihydroxyacetone phosphate. The protein operates within carbohydrate biosynthesis; gluconeogenesis. It participates in carbohydrate degradation; glycolysis; D-glyceraldehyde 3-phosphate from glycerone phosphate: step 1/1. In terms of biological role, involved in the gluconeogenesis. Catalyzes stereospecifically the conversion of dihydroxyacetone phosphate (DHAP) to D-glyceraldehyde-3-phosphate (G3P). This chain is Triosephosphate isomerase, found in Streptococcus thermophilus (strain CNRZ 1066).